A 357-amino-acid polypeptide reads, in one-letter code: Aminomethyltransferase (357 aa).

Belongs to the GcvT family. The glycine cleavage system is composed of four proteins: P, T, L and H.

The enzyme catalyses N(6)-[(R)-S(8)-aminomethyldihydrolipoyl]-L-lysyl-[protein] + (6S)-5,6,7,8-tetrahydrofolate = N(6)-[(R)-dihydrolipoyl]-L-lysyl-[protein] + (6R)-5,10-methylene-5,6,7,8-tetrahydrofolate + NH4(+). Functionally, the glycine cleavage system catalyzes the degradation of glycine. This is Aminomethyltransferase from Deinococcus deserti (strain DSM 17065 / CIP 109153 / LMG 22923 / VCD115).